Consider the following 247-residue polypeptide: 3-deoxy-manno-octulosonate cytidylyltransferase (247 aa).

Belongs to the KdsB family.

Its subcellular location is the cytoplasm. It catalyses the reaction 3-deoxy-alpha-D-manno-oct-2-ulosonate + CTP = CMP-3-deoxy-beta-D-manno-octulosonate + diphosphate. It functions in the pathway nucleotide-sugar biosynthesis; CMP-3-deoxy-D-manno-octulosonate biosynthesis; CMP-3-deoxy-D-manno-octulosonate from 3-deoxy-D-manno-octulosonate and CTP: step 1/1. The protein operates within bacterial outer membrane biogenesis; lipopolysaccharide biosynthesis. In terms of biological role, activates KDO (a required 8-carbon sugar) for incorporation into bacterial lipopolysaccharide in Gram-negative bacteria. The protein is 3-deoxy-manno-octulosonate cytidylyltransferase of Leptospira interrogans serogroup Icterohaemorrhagiae serovar Lai (strain 56601).